A 172-amino-acid polypeptide reads, in one-letter code: MLDAFAKVVAQADARGEFLSSQQIDALSDIIAEGNKRLDTVNKINSNASAIVTNSARALFAEQPQLAQPGGNAYPSRRMAACLRDMEIVLRYVSYAIAAGDSSVLDDRCLNGLRETYQALGTPGSSVAVAIQKMKEASISLANDVNGVPLGDCSSLVAELSVYFDRAAASVV.

An N4-methylasparagine modification is found at asparagine 72. (2R,3E)-phycocyanobilin contacts are provided by cysteine 82 and cysteine 153.

It belongs to the phycobiliprotein family. Heterodimer of an alpha and a beta subunit, which further assembles into trimers and the trimers into hexamers. The basic functional unit of phycobiliproteins is a ring-shaped hexamer formed from two back-to-back trimers contacting via the alpha chain subunits. The trimers are composed of alpha/beta subunit heterodimers arranged around a three-fold axis of symmetry. The phycoerythrins also contain a gamma subunit which is located in the center of the hexamer. Contains two covalently linked bilin chromophores.

Its subcellular location is the plastid. It is found in the chloroplast thylakoid membrane. Light-harvesting photosynthetic bile pigment-protein from the phycobiliprotein complex (phycobilisome, PBS). Phycocyanin is the major phycobiliprotein in the PBS rod. The chain is C-phycocyanin beta chain (cpcB) from Aglaothamnion neglectum (Red alga).